The primary structure comprises 351 residues: Peroxisomal membrane protein PEX14 (351 aa).

The disordered stretch occupies residues 54 to 75; the sequence is KARTGTVQASPSQQSVVPPRPP. The span at 60-70 shows a compositional bias: low complexity; it reads VQASPSQQSVV. Positions 83–91 match the SH3-binding motif; sequence APPLPERDW. The disordered stretch occupies residues 243–351; sequence APQLSTPPSE…RGIPAWQLNA (109 aa). Residues 245-258 show a composition bias toward polar residues; it reads QLSTPPSESTSRQS. Over residues 283 to 293 the composition is skewed to basic and acidic residues; sequence VLSREKDKDVN. The segment covering 294–303 has biased composition (polar residues); that stretch reads SDSIAQYEQR. Residues 320–334 are compositionally biased toward low complexity; that stretch reads SASNGGSSTTSGVAG.

This sequence belongs to the peroxin-14 family. Interacts with PEX13 (via SH3 domain); forming the PEX13-PEX14 docking complex. Interacts with PEX5 (via WxxxF/Y motifs).

The protein localises to the peroxisome membrane. Its function is as follows. Component of the PEX13-PEX14 docking complex, a translocon channel that specifically mediates the import of peroxisomal cargo proteins bound to PEX5 receptor. The PEX13-PEX14 docking complex forms a large import pore which can be opened to a diameter of about 9 nm. Mechanistically, PEX5 receptor along with cargo proteins associates with the PEX14 subunit of the PEX13-PEX14 docking complex in the cytosol, leading to the insertion of the receptor into the organelle membrane with the concomitant translocation of the cargo into the peroxisome matrix. The chain is Peroxisomal membrane protein PEX14 from Pichia angusta (Yeast).